The sequence spans 419 residues: Ubiquitin-like modifier-activating enzyme 5 (419 aa).

The tract at residues 18 to 47 (NRLGNVKKDHPLESSSNSKPTHQPKSPAPY) is disordered. Positions 30 to 41 (ESSSNSKPTHQP) are enriched in polar residues. The ATP site is built by Gly94, Asp115, Lys138, Asn161, and Asn194. 2 residues coordinate Zn(2+): Cys236 and Cys239. Cys260 functions as the Glycyl thioester intermediate in the catalytic mechanism. Zn(2+) contacts are provided by Cys313 and Cys318.

It belongs to the ubiquitin-activating E1 family. UBA5 subfamily. Interacts with ufc-1. In terms of tissue distribution, expressed in the intestine.

Its function is as follows. E1-like enzyme which activates ufm-1. Required for interaction between ufm-1 and ufc-1. This chain is Ubiquitin-like modifier-activating enzyme 5, found in Caenorhabditis elegans.